Here is a 138-residue protein sequence, read N- to C-terminus: Small ribosomal subunit protein uS8c (138 aa).

It belongs to the universal ribosomal protein uS8 family. In terms of assembly, part of the 30S ribosomal subunit.

It is found in the plastid. The protein resides in the chloroplast. Functionally, one of the primary rRNA binding proteins, it binds directly to 16S rRNA central domain where it helps coordinate assembly of the platform of the 30S subunit. This is Small ribosomal subunit protein uS8c (rps8) from Oenothera elata subsp. hookeri (Hooker's evening primrose).